The primary structure comprises 652 residues: O-fucosyltransferase 15 (652 aa).

Residues 91–111 form a helical; Signal-anchor for type II membrane protein membrane-spanning segment; sequence TAAFVIVLVGFFIFVNWFMLS. Asparagine 139, asparagine 169, and asparagine 251 each carry an N-linked (GlcNAc...) asparagine glycan. 426–428 is a binding site for substrate; that stretch reads HLR. N-linked (GlcNAc...) asparagine glycosylation is found at asparagine 464, asparagine 546, and asparagine 607.

The protein belongs to the glycosyltransferase GT106 family.

Its subcellular location is the membrane. Its pathway is glycan metabolism. The chain is O-fucosyltransferase 15 from Arabidopsis thaliana (Mouse-ear cress).